The following is a 494-amino-acid chain: Putative bifunctional dihydrofolate reductase-thymidylate synthase (494 aa).

A DHFR domain is found at 1-167 (MGIGKDGTLP…IKHSFISFVR (167 aa)). 2–8 (GIGKDGT) provides a ligand contact to NADP(+). Aspartate 16 is a binding site for substrate. NADP(+)-binding positions include 40–42 (RKT) and 61–64 (LTRS). Residue isoleucine 103 participates in substrate binding. 104 to 111 (GGGEILRQ) provides a ligand contact to NADP(+). Threonine 124 is a binding site for substrate. Residues 170–494 (KSIAEANDSS…HHKIEMKMAV (325 aa)) are thymidylate synthase. Arginine 231 contributes to the dUMP binding site. Cysteine 376 is an active-site residue. DUMP contacts are provided by residues histidine 377, 395 to 399 (QRSAD), asparagine 407, and 437 to 439 (HVY).

The protein in the N-terminal section; belongs to the dihydrofolate reductase family. This sequence in the C-terminal section; belongs to the thymidylate synthase family.

It carries out the reaction (6S)-5,6,7,8-tetrahydrofolate + NADP(+) = 7,8-dihydrofolate + NADPH + H(+). It catalyses the reaction dUMP + (6R)-5,10-methylene-5,6,7,8-tetrahydrofolate = 7,8-dihydrofolate + dTMP. It functions in the pathway cofactor biosynthesis; tetrahydrofolate biosynthesis; 5,6,7,8-tetrahydrofolate from 7,8-dihydrofolate: step 1/1. In terms of biological role, bifunctional enzyme. Involved in de novo dTMP biosynthesis. Key enzyme in folate metabolism. Can play two different roles depending on the source of dihydrofolate: de novo synthesis of tetrahydrofolate or recycling of the dihydrofolate released as one of the end products of the TS catalyzed reaction. Catalyzes an essential reaction for de novo glycine and purine synthesis, DNA precursor synthesis, and for the conversion of dUMP to dTMP. The sequence is that of Putative bifunctional dihydrofolate reductase-thymidylate synthase from Oryza sativa subsp. japonica (Rice).